Reading from the N-terminus, the 165-residue chain is Protein-export protein SecB (165 aa).

It belongs to the SecB family. Homotetramer, a dimer of dimers. One homotetramer interacts with 1 SecA dimer.

The protein resides in the cytoplasm. Functionally, one of the proteins required for the normal export of preproteins out of the cell cytoplasm. It is a molecular chaperone that binds to a subset of precursor proteins, maintaining them in a translocation-competent state. It also specifically binds to its receptor SecA. The polypeptide is Protein-export protein SecB (Ruegeria pomeroyi (strain ATCC 700808 / DSM 15171 / DSS-3) (Silicibacter pomeroyi)).